The chain runs to 294 residues: Phosphoribosylaminoimidazole-succinocarboxamide synthase (294 aa).

Belongs to the SAICAR synthetase family.

The enzyme catalyses 5-amino-1-(5-phospho-D-ribosyl)imidazole-4-carboxylate + L-aspartate + ATP = (2S)-2-[5-amino-1-(5-phospho-beta-D-ribosyl)imidazole-4-carboxamido]succinate + ADP + phosphate + 2 H(+). Its pathway is purine metabolism; IMP biosynthesis via de novo pathway; 5-amino-1-(5-phospho-D-ribosyl)imidazole-4-carboxamide from 5-amino-1-(5-phospho-D-ribosyl)imidazole-4-carboxylate: step 1/2. This Thermoplasma acidophilum (strain ATCC 25905 / DSM 1728 / JCM 9062 / NBRC 15155 / AMRC-C165) protein is Phosphoribosylaminoimidazole-succinocarboxamide synthase.